Here is a 334-residue protein sequence, read N- to C-terminus: Sulfhydrogenase 2 subunit beta (334 aa).

4Fe-4S ferredoxin-type domains are found at residues lysine 220 to threonine 250 and cysteine 294 to glutamate 328. 8 residues coordinate [4Fe-4S] cluster: cysteine 229, cysteine 232, cysteine 235, cysteine 239, cysteine 306, cysteine 309, cysteine 312, and cysteine 316.

Dimer of heterotetramer of alpha, beta, gamma and delta subunits. The nickel-containing alpha and delta subunits constitute the hydrogenase activity. The beta and gamma subunits (flavin-containing dimer) constitute the sulfur reductase activity. Requires [4Fe-4S] cluster as cofactor.

Its subcellular location is the cytoplasm. It carries out the reaction n sulfur + H2 = (n-1) sulfur + hydrogen sulfide + H(+). Part of a bifunctional enzyme complex that functions as a hydrogen-evolving hydrogenase with sulfur-reducing activity. May play a role in hydrogen cycling during fermentative growth. Activity exhibited with NAD in addition to NADPH. The beta and gamma subunits form the sulfur-reducing component that catalyzes the cytoplasmic production of hydrogen sulfide in the presence of elemental sulfur. This is Sulfhydrogenase 2 subunit beta from Pyrococcus furiosus (strain ATCC 43587 / DSM 3638 / JCM 8422 / Vc1).